Consider the following 193-residue polypeptide: Acyl carrier protein phosphodiesterase (193 aa).

This sequence belongs to the AcpH family.

The enzyme catalyses holo-[ACP] + H2O = apo-[ACP] + (R)-4'-phosphopantetheine + H(+). Its function is as follows. Converts holo-ACP to apo-ACP by hydrolytic cleavage of the phosphopantetheine prosthetic group from ACP. The sequence is that of Acyl carrier protein phosphodiesterase from Escherichia coli O127:H6 (strain E2348/69 / EPEC).